Reading from the N-terminus, the 611-residue chain is Pleckstrin homology domain-containing family N member 1 (611 aa).

The disordered stretch occupies residues 1-45 (MGNSHCVPQAPRRLRASFSRKPSLKGNREDSARMSAGLPGPEAAR). A lipid anchor (N-myristoyl glycine) is attached at Gly2. The interaction with C1QBP stretch occupies residues 61–100 (TDILDLENQRENLEQPFLSVFKKGRRRVPVRNLGKVVHYA). 2 PH domains span residues 96–192 (VVHY…TALL) and 222–319 (AVCA…THRE). Tyr302 carries the phosphotyrosine modification. Disordered stretches follow at residues 323–424 (PLPG…PVTP), 438–468 (ESSP…TSHR), and 483–611 (MQSA…VQWI). Low complexity predominate over residues 341–350 (GSLSSGGQTS). Residues 360–391 (STRTSHSLPESSVPSTVGCSSQHTPDQANSDR) show a composition bias toward polar residues. A Phosphotyrosine modification is found at Tyr456. Low complexity predominate over residues 498 to 509 (VPVSVPASDPRS). Position 559 is a phosphoserine (Ser559). Basic and acidic residues predominate over residues 570 to 585 (RSPRRSRDPGYDHLWD).

As to quaternary structure, found in a complex with cytochrome c mRNA and various ribosomal proteins. Interacts with C1QBP. Interacts with ELAVL1. Interacts with BID. In terms of processing, phosphorylation is essential for its mitochondrial localization and regulates its interaction with C1QBP. Ubiquitous. Epressed in several cancer cell lines of differing origin.

The protein resides in the cell membrane. It localises to the mitochondrion. The protein localises to the mitochondrion membrane. Its function is as follows. Controls the stability of the leptin mRNA harboring an AU-rich element (ARE) in its 3' UTR, in cooperation with the RNA stabilizer ELAVL1. Decreases the stability of the leptin mRNA by antagonizing the function of ELAVL1 by inducing its atypical recruitment from the nucleus to the cytosol. Binds to cardiolipin (CL), phosphatidic acid (PA), phosphatidylinositol 4-phosphate (PtdIns(4)P) and phosphatidylserine (PS). Promotes apoptosis by enhancing BAX-BAK hetero-oligomerization via interaction with BID in colon cancer cells. In Homo sapiens (Human), this protein is Pleckstrin homology domain-containing family N member 1 (PLEKHN1).